The sequence spans 281 residues: 4-diphosphocytidyl-2-C-methyl-D-erythritol kinase (281 aa).

Catalysis depends on residues K11 and D138.

This sequence belongs to the GHMP kinase family. IspE subfamily.

The catalysed reaction is 4-CDP-2-C-methyl-D-erythritol + ATP = 4-CDP-2-C-methyl-D-erythritol 2-phosphate + ADP + H(+). It functions in the pathway isoprenoid biosynthesis; isopentenyl diphosphate biosynthesis via DXP pathway; isopentenyl diphosphate from 1-deoxy-D-xylulose 5-phosphate: step 3/6. Catalyzes the phosphorylation of the position 2 hydroxy group of 4-diphosphocytidyl-2C-methyl-D-erythritol. The protein is 4-diphosphocytidyl-2-C-methyl-D-erythritol kinase of Pelagibacter ubique (strain HTCC1062).